The chain runs to 138 residues: MKSDSPVHGESHTECQSPCPLSCMPARLEGSTKRRLAANARERRRMQGLNTAFDSLRKVVPQWGEDKKLSKYETLQMALSYIMALSRILTEAERYSRTDPGEWTKMHFDHIQEEQCLSYMGVRCPRDCDRYLPQTFSH.

A bHLH domain is found at 33 to 85 (KRRLAANARERRRMQGLNTAFDSLRKVVPQWGEDKKLSKYETLQMALSYIMAL).

Its subcellular location is the nucleus. It is found in the perikaryon. The protein resides in the cell projection. The protein localises to the axon. In terms of biological role, transcription factor that binds to DNA at the consensus sequence 5'-CAG[GC]TG-3'. Positively regulates the determination of retinal ganglion cell fate and formation of the optic nerve and retino-hypothalamic tract. Required for retinal circadian rhythm photoentrainment. Plays a role in brainstem auditory signaling and binaural processing. Regulates the differentiation of olfactory receptor neurons. During retinal neurogenesis, activates the transcription of several genes such as brn3d, coe3, cbfa2t2, glis2, elrC and xgadd45-gamma. The sequence is that of Transcription factor Atoh7-b from Xenopus laevis (African clawed frog).